A 726-amino-acid polypeptide reads, in one-letter code: Beta-adducin (726 aa).

The tract at residues Met-1 to Ser-25 is disordered. Phosphoserine is present on residues Ser-11 and Ser-25. Phosphothreonine; by PKA is present on Thr-55. Phosphoserine occurs at positions 60 and 344. The interaction with calmodulin stretch occupies residues Lys-425 to Asn-444. A disordered region spans residues Ala-525 to Ser-726. Phosphoserine occurs at positions 530 and 532. Thr-533 is subject to Phosphothreonine. Ser-535 carries the phosphoserine modification. Over residues Glu-566–Ala-586 the composition is skewed to basic and acidic residues. A compositionally biased stretch (low complexity) spans Glu-588–Ala-606. 4 positions are modified to phosphoserine: Ser-592, Ser-596, Ser-600, and Ser-604. The residue at position 611 (Thr-611) is a Phosphothreonine. 4 positions are modified to phosphoserine: Ser-613, Ser-617, Ser-619, and Ser-621. Positions Ser-621 to Thr-631 are enriched in basic and acidic residues. The segment covering Ser-632 to Glu-645 has biased composition (low complexity). Residues Gly-665 to Asp-674 are compositionally biased toward polar residues. Position 675 is a phosphothreonine (Thr-675). Phosphoserine occurs at positions 686, 689, 693, 697, 699, and 701. Low complexity predominate over residues Ser-689–Ser-701. Positions Pro-702–Ser-726 are enriched in basic residues. A Phosphoserine; by PKC modification is found at Ser-703. An interaction with calmodulin region spans residues Lys-704–Lys-721. Ser-713 bears the Phosphoserine; by PKA and PKC mark.

This sequence belongs to the aldolase class II family. Adducin subfamily. In terms of assembly, heterodimer of an alpha and a beta subunit. Found in a complex with ADD2, DMTN and SLC2A1. Interacts with SLC2A1. The N-terminus is blocked. As to expression, expressed mainly in brain, spleen, kidney cortex and medulla, and heart. Also expressed in human umbilical vein endothelial cells, human vascular smooth muscle cells, kidney tubular cells and K-562 cell line.

The protein resides in the cytoplasm. It localises to the cytoskeleton. The protein localises to the cell membrane. In terms of biological role, membrane-cytoskeleton-associated protein that promotes the assembly of the spectrin-actin network. Binds to the erythrocyte membrane receptor SLC2A1/GLUT1 and may therefore provide a link between the spectrin cytoskeleton to the plasma membrane. Binds to calmodulin. Calmodulin binds preferentially to the beta subunit. The chain is Beta-adducin (ADD2) from Homo sapiens (Human).